Consider the following 251-residue polypeptide: Sugar fermentation stimulation protein homolog (251 aa).

The protein belongs to the SfsA family.

This Symbiobacterium thermophilum (strain DSM 24528 / JCM 14929 / IAM 14863 / T) protein is Sugar fermentation stimulation protein homolog.